Consider the following 127-residue polypeptide: Small ribosomal subunit protein uS12 (127 aa).

Position 89 is a 3-methylthioaspartic acid (aspartate 89).

Belongs to the universal ribosomal protein uS12 family. As to quaternary structure, part of the 30S ribosomal subunit. Contacts proteins S8 and S17. May interact with IF1 in the 30S initiation complex.

Functionally, with S4 and S5 plays an important role in translational accuracy. Interacts with and stabilizes bases of the 16S rRNA that are involved in tRNA selection in the A site and with the mRNA backbone. Located at the interface of the 30S and 50S subunits, it traverses the body of the 30S subunit contacting proteins on the other side and probably holding the rRNA structure together. The combined cluster of proteins S8, S12 and S17 appears to hold together the shoulder and platform of the 30S subunit. The chain is Small ribosomal subunit protein uS12 from Campylobacter lari (strain RM2100 / D67 / ATCC BAA-1060).